The following is a 258-amino-acid chain: Proliferating cell nuclear antigen (258 aa).

Residues 61–80 (RCDHPVTLGMDLTSLSKILR) mediate DNA binding. K127 is covalently cross-linked (Glycyl lysine isopeptide (Lys-Gly) (interchain with G-Cter in SUMO)). K164 is covalently cross-linked (Glycyl lysine isopeptide (Lys-Gly) (interchain with G-Cter in SUMO); alternate). K164 is covalently cross-linked (Glycyl lysine isopeptide (Lys-Gly) (interchain with G-Cter in ubiquitin); alternate).

This sequence belongs to the PCNA family. In terms of assembly, homotrimer. Interacts with RAD30. Interacts with MCM10. Interacts with UBP10. In terms of processing, sumoylated on Lys-164, and to a lesser extent on Lys-127 by the UBC9/SIZ1 complex during S-phase; which impairs ubiquitination and function in DNA repair. Monoubiquitinated on Lys-164 by the UBC2/RAD18 complex upon DNA damage, and then polyubiquitinated through 'Lys-63'-linkage by UBC13/MMS2. Ubiquitination is required for UBC2-mediated DNA repair. Post-translationally, lys-164 is deubiquitinated by UBP10.

The protein resides in the nucleus. Its function is as follows. This protein is an auxiliary protein of DNA polymerase delta and is involved in the control of eukaryotic DNA replication by increasing the polymerase's processibility during elongation of the leading strand. Involved in DNA repair. This chain is Proliferating cell nuclear antigen (POL30), found in Saccharomyces cerevisiae (strain ATCC 204508 / S288c) (Baker's yeast).